Consider the following 211-residue polypeptide: Uracil phosphoribosyltransferase (211 aa).

Residues Arg77, Arg102, and Asp129 to Ser137 each bind 5-phospho-alpha-D-ribose 1-diphosphate. Uracil contacts are provided by residues Ile192 and Gly197 to Ala199. 5-phospho-alpha-D-ribose 1-diphosphate is bound at residue Asp198.

The protein belongs to the UPRTase family. It depends on Mg(2+) as a cofactor.

It carries out the reaction UMP + diphosphate = 5-phospho-alpha-D-ribose 1-diphosphate + uracil. It functions in the pathway pyrimidine metabolism; UMP biosynthesis via salvage pathway; UMP from uracil: step 1/1. Allosterically activated by GTP. Catalyzes the conversion of uracil and 5-phospho-alpha-D-ribose 1-diphosphate (PRPP) to UMP and diphosphate. The sequence is that of Uracil phosphoribosyltransferase from Corynebacterium aurimucosum (strain ATCC 700975 / DSM 44827 / CIP 107346 / CN-1) (Corynebacterium nigricans).